Reading from the N-terminus, the 198-residue chain is Dephospho-CoA kinase (198 aa).

The DPCK domain occupies 2–90 (LIAIVGKPGV…KLSLVTKPLL (89 aa)). 10-15 (GVGKTS) is a binding site for ATP.

Belongs to the CoaE family.

It localises to the cytoplasm. It catalyses the reaction 3'-dephospho-CoA + ATP = ADP + CoA + H(+). It functions in the pathway cofactor biosynthesis; coenzyme A biosynthesis; CoA from (R)-pantothenate: step 5/5. Catalyzes the phosphorylation of the 3'-hydroxyl group of dephosphocoenzyme A to form coenzyme A. This Mycoplasma genitalium (strain ATCC 33530 / DSM 19775 / NCTC 10195 / G37) (Mycoplasmoides genitalium) protein is Dephospho-CoA kinase.